We begin with the raw amino-acid sequence, 791 residues long: Endonuclease MutS2 (791 aa).

337–344 (GPNTGGKT) lines the ATP pocket. Positions 689-715 (AAQASQKKPEKSVRSSRGLRSSRASSE) are disordered. Over residues 703–713 (SSRGLRSSRAS) the composition is skewed to low complexity. The Smr domain occupies 716–791 (LDLRGQRYEE…GTGATIVNLQ (76 aa)).

Belongs to the DNA mismatch repair MutS family. MutS2 subfamily. Homodimer. Binds to stalled ribosomes, contacting rRNA.

Endonuclease that is involved in the suppression of homologous recombination and thus may have a key role in the control of bacterial genetic diversity. Functionally, acts as a ribosome collision sensor, splitting the ribosome into its 2 subunits. Detects stalled/collided 70S ribosomes which it binds and splits by an ATP-hydrolysis driven conformational change. Acts upstream of the ribosome quality control system (RQC), a ribosome-associated complex that mediates the extraction of incompletely synthesized nascent chains from stalled ribosomes and their subsequent degradation. Probably generates substrates for RQC. This Lactobacillus gasseri (strain ATCC 33323 / DSM 20243 / BCRC 14619 / CIP 102991 / JCM 1131 / KCTC 3163 / NCIMB 11718 / NCTC 13722 / AM63) protein is Endonuclease MutS2.